The chain runs to 135 residues: Ribosome-binding factor A (135 aa).

This sequence belongs to the RbfA family. Monomer. Binds 30S ribosomal subunits, but not 50S ribosomal subunits or 70S ribosomes.

It is found in the cytoplasm. Functionally, one of several proteins that assist in the late maturation steps of the functional core of the 30S ribosomal subunit. Associates with free 30S ribosomal subunits (but not with 30S subunits that are part of 70S ribosomes or polysomes). Required for efficient processing of 16S rRNA. May interact with the 5'-terminal helix region of 16S rRNA. The polypeptide is Ribosome-binding factor A (Caldicellulosiruptor saccharolyticus (strain ATCC 43494 / DSM 8903 / Tp8T 6331)).